The chain runs to 95 residues: Ragulator complex protein LAMTOR4 homolog (95 aa).

Belongs to the LAMTOR4 family. Part of the Ragulator complex.

Its subcellular location is the lysosome. In terms of biological role, regulator of the TOR pathway, a signaling cascade that promotes cell growth in response to growth factors, energy levels, and amino acids. As part of the Ragulator complex, may activate the TOR signaling cascade in response to amino acids. The sequence is that of Ragulator complex protein LAMTOR4 homolog from Nematostella vectensis (Starlet sea anemone).